We begin with the raw amino-acid sequence, 127 residues long: Glycine cleavage system H protein (127 aa).

The 83-residue stretch at Glu22–Glu104 folds into the Lipoyl-binding domain. N6-lipoyllysine is present on Lys63.

The protein belongs to the GcvH family. The glycine cleavage system is composed of four proteins: P, T, L and H. The cofactor is (R)-lipoate.

The glycine cleavage system catalyzes the degradation of glycine. The H protein shuttles the methylamine group of glycine from the P protein to the T protein. In terms of biological role, is also involved in protein lipoylation via its role as an octanoyl/lipoyl carrier protein intermediate. In Bacillus cereus (strain ATCC 10987 / NRS 248), this protein is Glycine cleavage system H protein.